The following is a 440-amino-acid chain: Calcium/calmodulin-regulated receptor-like kinase 1 (440 aa).

Residues 8–28 form a helical membrane-spanning segment; the sequence is LIVGISLGLVIGVVLAISALF. The calmodulin binding stretch occupies residues 28–228; the sequence is FCFRYHRKKS…ARGLEYLHDG (201 aa). A Protein kinase domain is found at 113–380; sequence CNFTTLIGQG…DIVQVLTRVI (268 aa). Residues 119–127 and Lys141 contribute to the ATP site; that span reads IGQGAFGPV. Tyr186 bears the Phosphotyrosine mark. Asp237 (proton acceptor) is an active-site residue. Ser241 is subject to Phosphoserine. Thr274 bears the Phosphothreonine mark. Position 282 is a phosphotyrosine (Tyr282). The calmodulin binding stretch occupies residues 369 to 440; that stretch reads MRDIVQVLTR…DSSIAEDVIL (72 aa). The segment at 386 to 427 is disordered; that stretch reads RKRQKNSPSPSPRLPPPPPIVEESEGELTANGSLRSEIHRRD. Positions 394-405 are enriched in pro residues; sequence SPSPRLPPPPPI.

The protein belongs to the protein kinase superfamily. Ser/Thr protein kinase family. As to quaternary structure, interacts with calmodulin (CaM) in a calcium- (Ca(2+)-) dependent manner. Binds to MEKK1. As to expression, similar transcript expression levels in seedlings, roots, leaves, stems and flowers, and lower levels in siliques, but protein accumulates mostly in 7-day-old seedlings, old roots and young leaves and, to a lower extent, in young roots, old leaves, flowers and siliques (at protein level).

The protein resides in the cell membrane. It is found in the endosome membrane. It catalyses the reaction L-seryl-[protein] + ATP = O-phospho-L-seryl-[protein] + ADP + H(+). It carries out the reaction L-threonyl-[protein] + ATP = O-phospho-L-threonyl-[protein] + ADP + H(+). With respect to regulation, kinase activity is stimulated by calcium/calmodulin, but blocked by chlorpromazine. Functionally, required for cold tolerance, via the activation of MAP kinases activity. Phosphorylates and activates MEKK1 in response to cold in a calcium-dependent manner. The chain is Calcium/calmodulin-regulated receptor-like kinase 1 from Arabidopsis thaliana (Mouse-ear cress).